Consider the following 131-residue polypeptide: Fumarate reductase subunit C (131 aa).

3 helical membrane-spanning segments follow: residues 30–50 (EGTAVPAVWFSIELIFALFAL), 57–77 (WAGFVDFLQNPVIVIINLITL), and 109–129 (IIKSLWAVTVVATIVILFVAL).

The protein belongs to the FrdC family. Part of an enzyme complex containing four subunits: a flavoprotein (FrdA), an iron-sulfur protein (FrdB), and two hydrophobic anchor proteins (FrdC and FrdD).

The protein resides in the cell inner membrane. In terms of biological role, two distinct, membrane-bound, FAD-containing enzymes are responsible for the catalysis of fumarate and succinate interconversion; fumarate reductase is used in anaerobic growth, and succinate dehydrogenase is used in aerobic growth. Anchors the catalytic components of the fumarate reductase complex to the cell inner membrane, binds quinones. This chain is Fumarate reductase subunit C, found in Shigella flexneri.